The following is a 1014-amino-acid chain: MPESIIAGIPVHFPFEPYEVQRAFMEKVIMCLRDGTNGVLESPTGTGKTLSLLCSSLAWIRTRQSEHQINMQKLQMEQQQRQATGGSATGAISDLALTMGKANNWGVPKVIYASRTHSQLTQAMRELKRTAYASMRSVVLGSRDQLCIHPDVMKEQGNSNKVNMCKLKVHAKTCSFQLRVESKKDHPDFRGPSIMDIEDLVKVGQRLKMCPYYASKELVSSADITFMPYNYLLDPKARKANKIELSNTIVILDEAHNIEKICEESASVQIRSSDVAMAIEDVTHIMKIFTSADSQDSGGPEEPKDFTLDDLTLLKEMLLELEKAIDGVVVENQVEGTTYPAAHIYELLGKANFTYGNCATIVALLDKLVQYLMVASQHSMLRKGGSFMVLSDLLNVVFANKEDIMAKVHRSFKVHVQIEDTKQTKPAGNSNSKQTGWLGKGNNATSTVSKTAKIINFWCFNPGFGMEQLLNTQVRSVILTSGTLAPLKPLIAELAIPVAQHLENPHIVDQSQVYVKIIGTGPDREQLISNYKNRDNPKYISSLGQTILNVSRIVPDGLLVFFPSYPMLNQCVDAWQASGLWADLSSRKPIFLEPRGKDQFTSTMEEFYQAIRDSKGACFMAVCRGKVSEGLDFADRNGRAVIITGLPFPPLKDPKVILKRRYLETNRTKENQLLSGQEWYNLDATRAVNQAIGRVIRHRHDYGAILLCDARFQDASQVQQLSKWIRGHLGARPQSSPFGPIVRELRQFFKHAEQTMVQPDERVVEPPLQIVCKEEQPTLTPSYNSNTQIKREPGSGVNKFQLASELAAKAEMANSIKSWTPADYVNAAGCTNQSQTAPNAMDFMSRLNSNVTSIDFNNTDLVKIHKRERSSPTANESLTSGKKRFKLISSTDMVKTEPGTSNSCSYGNTSSSGSDSRCCSAKPAEYPLKEAPESRADFLREVRSVVDSDKFRSFGKALLAYKTGGDNCFEVLMVLLLDVLGAPKLRYLLHGMRRYLKNEHKEEFDIRLASLQAS.

One can recognise a Helicase ATP-binding domain in the interval alanine 7–alanine 324. Serine 42–threonine 49 provides a ligand contact to ATP. Cysteine 147, cysteine 165, cysteine 174, and cysteine 210 together coordinate [4Fe-4S] cluster. The short motif at aspartate 253–histidine 256 is the DEAH box element. The residue at position 873 (threonine 873) is a Phosphothreonine. The interval threonine 891–arginine 917 is disordered. Residues glycine 899–arginine 917 are compositionally biased toward low complexity.

It belongs to the helicase family. RAD3/XPD subfamily.

The protein resides in the nucleus. It carries out the reaction ATP + H2O = ADP + phosphate + H(+). A probable ATP-dependent DNA helicase implicated in DNA repair and the maintenance of genomic stability. Acts as an anti-recombinase to counteract toxic recombination and limit crossover during meiosis. Regulates meiotic recombination and crossover homeostasis by physically dissociating strand invasion events and thereby promotes noncrossover repair by meiotic synthesis dependent strand annealing (SDSA) as well as disassembly of D loop recombination intermediates. The sequence is that of Regulator of telomere elongation helicase 1 homolog from Drosophila mojavensis (Fruit fly).